Here is a 476-residue protein sequence, read N- to C-terminus: Sulfate adenylyltransferase subunit 1 (476 aa).

In terms of domain architecture, tr-type G spans 24-241 (KSLLRFLTCG…EDVDFVQEQE (218 aa)). The tract at residues 33-40 (GSVDDGKS) is G1. GTP is bound at residue 33–40 (GSVDDGKS). Positions 91–95 (GITID) are G2. The G3 stretch occupies residues 112 to 115 (DTPG). GTP contacts are provided by residues 112–116 (DTPGH) and 167–170 (NKMD). A G4 region spans residues 167–170 (NKMD). A G5 region spans residues 205–207 (SAL).

This sequence belongs to the TRAFAC class translation factor GTPase superfamily. Classic translation factor GTPase family. CysN/NodQ subfamily. Heterodimer composed of CysD, the smaller subunit, and CysN.

The enzyme catalyses sulfate + ATP + H(+) = adenosine 5'-phosphosulfate + diphosphate. The protein operates within sulfur metabolism; hydrogen sulfide biosynthesis; sulfite from sulfate: step 1/3. In terms of biological role, with CysD forms the ATP sulfurylase (ATPS) that catalyzes the adenylation of sulfate producing adenosine 5'-phosphosulfate (APS) and diphosphate, the first enzymatic step in sulfur assimilation pathway. APS synthesis involves the formation of a high-energy phosphoric-sulfuric acid anhydride bond driven by GTP hydrolysis by CysN coupled to ATP hydrolysis by CysD. The protein is Sulfate adenylyltransferase subunit 1 of Photobacterium profundum (strain SS9).